A 593-amino-acid chain; its full sequence is DEAD-box ATP-dependent RNA helicase 18 (593 aa).

Residues 16 to 44 carry the Q motif motif; that stretch reads FSDLEPPLSGDIIEALNQSDFEFCTPVQA. Residues 47–226 form the Helicase ATP-binding domain; the sequence is IPLLCSYKDV…KAGLRNPVRV (180 aa). 60–67 is an ATP binding site; sequence AATGSGKT. A DEAD box motif is present at residues 174-177; that stretch reads DEAD. The Helicase C-terminal domain maps to 264 to 411; the sequence is QLVDLLIKNS…ERKCSEDASD (148 aa). The span at 506–524 shows a compositional bias: basic and acidic residues; that stretch reads QRQQNLQVRKEKRQEEKKE. Residues 506-561 form a disordered region; that stretch reads QRQQNLQVRKEKRQEEKKEKGKRKRVDASASNDPKKASRKLTGKQRQTIQTAEDEE.

This sequence belongs to the DEAD box helicase family. DDX55/SPB4 subfamily.

The catalysed reaction is ATP + H2O = ADP + phosphate + H(+). This Arabidopsis thaliana (Mouse-ear cress) protein is DEAD-box ATP-dependent RNA helicase 18 (RH18).